Here is a 251-residue protein sequence, read N- to C-terminus: Flap endonuclease Xni (251 aa).

A Mg(2+)-binding site is contributed by Asp104. The region spanning 160–249 is the 5'-3' exonuclease domain; sequence VQPQQLPDYW…IDGNLQQLRL (90 aa). Positions 171, 172, 180, 182, and 185 each coordinate K(+). An interaction with DNA region spans residues 184–189; that stretch reads GIGPKS.

It belongs to the Xni family. It depends on Mg(2+) as a cofactor. K(+) serves as cofactor.

In terms of biological role, has flap endonuclease activity. During DNA replication, flap endonucleases cleave the 5'-overhanging flap structure that is generated by displacement synthesis when DNA polymerase encounters the 5'-end of a downstream Okazaki fragment. The polypeptide is Flap endonuclease Xni (Escherichia coli O45:K1 (strain S88 / ExPEC)).